Consider the following 189-residue polypeptide: Glycerol-3-phosphate acyltransferase (189 aa).

A run of 5 helical transmembrane segments spans residues 1–21 (MVWLLAILAYLLGSLSFAVLL), 50–70 (KLAILTLLGDVGKGLLPVLVA), 72–92 (WLGLGVMEEAWVGIAAVIGHL), 111–131 (MLLGLYPPAVLLAAAAWLLTF), and 151–171 (LLAWQQPGALLPMTVLTALIV).

This sequence belongs to the PlsY family. As to quaternary structure, probably interacts with PlsX.

It localises to the cell inner membrane. It catalyses the reaction an acyl phosphate + sn-glycerol 3-phosphate = a 1-acyl-sn-glycero-3-phosphate + phosphate. The protein operates within lipid metabolism; phospholipid metabolism. Catalyzes the transfer of an acyl group from acyl-phosphate (acyl-PO(4)) to glycerol-3-phosphate (G3P) to form lysophosphatidic acid (LPA). This enzyme utilizes acyl-phosphate as fatty acyl donor, but not acyl-CoA or acyl-ACP. This chain is Glycerol-3-phosphate acyltransferase, found in Pseudomonas paraeruginosa (strain DSM 24068 / PA7) (Pseudomonas aeruginosa (strain PA7)).